A 1162-amino-acid polypeptide reads, in one-letter code: PAN2-PAN3 deadenylation complex catalytic subunit PAN2 (1162 aa).

WD repeat units lie at residues 27–66, 153–193, 196–233, and 300–339; these read AKEKSATKMAFDQDVNLIWVGDTYGRVSSYDPSYSLYTRH, NTVQ…VVKT, GHSCMVSSMDFRDHTLVTAGKSKRFNMMYPDQFVNVYD, and HPCQSVTQLQLSPSGDYIAFIEHDNNINMWSRSNGMTGFT. Residues 341 to 491 are linker; sequence TATTILEYPD…LMNYKPSNDR (151 aa). A disordered region spans residues 401 to 443; it reads VPLPPKSSAASSSHTALSTSSDSRPNTARSGNPSSGGQKYRLL. Positions 407-423 are enriched in low complexity; it reads SSAASSSHTALSTSSDS. Residues 424 to 437 are compositionally biased toward polar residues; sequence RPNTARSGNPSSGG. Positions 492–904 constitute a USP domain; it reads EVPPAFTKLQ…TPEIAIYSDA (413 aa). The region spanning 956–1126 is the Exonuclease domain; it reads VALDAEFVAL…IEDAYTALVL (171 aa). The a divalent metal cation site is built by aspartate 959, glutamate 961, aspartate 1068, and aspartate 1119.

The protein belongs to the peptidase C19 family. PAN2 subfamily. Forms a heterotrimer with an asymmetric homodimer of the regulatory subunit PAN3 to form the poly(A)-nuclease (PAN) deadenylation complex. A divalent metal cation is required as a cofactor.

It localises to the cytoplasm. The catalysed reaction is Exonucleolytic cleavage of poly(A) to 5'-AMP.. Positively regulated by the regulatory subunit PAN3. In terms of biological role, catalytic subunit of the poly(A)-nuclease (PAN) deadenylation complex, one of two cytoplasmic mRNA deadenylases involved in mRNA turnover. PAN specifically shortens poly(A) tails of RNA and the activity is stimulated by poly(A)-binding protein PAB1. PAN deadenylation is followed by rapid degradation of the shortened mRNA tails by the CCR4-NOT complex. Deadenylated mRNAs are then degraded by two alternative mechanisms, namely exosome-mediated 3'-5' exonucleolytic degradation, or deadenylation-dependent mRNA decaping and subsequent 5'-3' exonucleolytic degradation by XRN1. May also be involved in post-transcriptional maturation of mRNA poly(A) tails. This is PAN2-PAN3 deadenylation complex catalytic subunit PAN2 from Eremothecium gossypii (strain ATCC 10895 / CBS 109.51 / FGSC 9923 / NRRL Y-1056) (Yeast).